Reading from the N-terminus, the 851-residue chain is METQLSVQLGLDSLLTDFGLESVMNKQQQLFANMGLSDIGAPTPSTAIPVPNAHLHPSMVAGSDPSNPVVGFGFGSPSSTTSSSPPLSNSPTIEQQQHAQLTAMMQGIMSNNNVAVSNGSGVQVASVPAVHCSGCKSNETATSFCQDCNANLCDNCTMAHKFMHCFADHRVVSLTTPGTGSSSSSTSSSSSASSTSSHQVPSLGGKQSPDSMMLGSGKRSVLCLQHRASELVFFCVSCNLAICRDCTVSDHPSGTHQYELIADVADKQMLKMEQLIADARSKHADMLDMFKQVDNKQQVLTASLHNAHAQLEETVSNLINVIQDQKKTLAKDIDNAFAAKQIQLTMVDKRIQSMADKLSQTIEFSRRLMSFASPAEVMVFKQLLDTRLQLFLGFNPDTSGVLMTPCEIEYLGAAGLFNNSASTVSQLLGSVHGGSPINNAPAANDFLMPQAGLAPIGRAQSRIIPIEQNQLARSPPHHIAGSLPMNAYSDSNLLRPNKDFGGSSQSLGPFNPLGASVPGAAADPFSSQYDKWSLGVEPSVGGLLEGGNVDEEKFQTLFPPSRSQIKRQKMIYHCKFGEFGVMEGQFTEPSGVAVNGQGDIVVADTNNHRIQVFDKEGRFKFQFGECGKRDGQLLYPNRVAVNRTTGDFVVTERSPTHQIQVYNQYGQFLRKFGANILQHPRGVCVDSKGRIIVVECKVMRVIIFDMFGNILQKFSCSRYLEFPNGVCTNDKNEILISDNRAHCIKVFSYEGQYLRQIGGEGVTNYPIGVGINSLGEVVVADNHNNFNLTVFSQDGTMIGALESRVKHAQCFDVALVDDGSVVLASKDYRLYLYRFLPATSGQSTSSASSQI.

A disordered region spans residues 71–91; sequence GFGFGSPSSTTSSSPPLSNSP. The span at 76–91 shows a compositional bias: low complexity; it reads SPSSTTSSSPPLSNSP. The segment at 127 to 174 adopts a B box-type 1; atypical zinc-finger fold; that stretch reads VPAVHCSGCKSNETATSFCQDCNANLCDNCTMAHKFMHCFADHRVVSL. Residues C132, C135, C156, and H160 each contribute to the Zn(2+) site. Over residues 176-197 the composition is skewed to low complexity; that stretch reads TPGTGSSSSSTSSSSSASSTSS. The segment at 176–211 is disordered; that stretch reads TPGTGSSSSSTSSSSSASSTSSHQVPSLGGKQSPDS. A B box-type 2 zinc finger spans residues 218-261; the sequence is KRSVLCLQHRASELVFFCVSCNLAICRDCTVSDHPSGTHQYELI. The Zn(2+) site is built by C223, H226, C246, and H251. Residues 303 to 331 are a coiled coil; that stretch reads SLHNAHAQLEETVSNLINVIQDQKKTLAK. 5 NHL repeats span residues 573-616, 620-665, 666-707, 708-750, and 751-794; these read HCKF…FDKE, KFQF…YNQY, GQFL…FDMF, GNIL…FSYE, and GQYL…FSQD.

As to expression, present in cells in which nucleoli are absent, and absent from large cells in which nucleoli are prominent. Highly expressed in the gonads.

It localises to the cytoplasm. In terms of biological role, translational repressor that inhibits protein synthesis. Represses the translation of mRNAs such as fib-1, probably by being recruited by RNA-binding protein nos-2 and the Pumilio proteins puf-5, puf-8 and puf-9 to the consensus core PUF binding motif in the 3'-UTR of fib-1 mRNA. Negatively regulates ribosomal RNA (rRNA) synthesis, ribosomal protein synthesis and nucleolus size. Its role in the negative regulation of nucleolus size is most likely through its negative regulation of the translation of proteins such as the rRNA 2'-O-methyltransferase fib-1, and dao-5. Might act directly as a transcription factor to inhibit RNA polymerase I (rRNA) and III (5S RNA) transcription. Plays a role in embryonic development, and in particular, is involved in regulating the localization of proteins, such as par-2, that are required for embryonic cell polarity. Plays a role in the regulation of lifespan, and the response to nutrient availability. The sequence is that of B-box type zinc finger protein ncl-1 from Caenorhabditis elegans.